We begin with the raw amino-acid sequence, 551 residues long: Alkaline/neutral invertase CINV1 (551 aa).

Residue methionine 1 is modified to N-acetylmethionine. Phosphoserine occurs at positions 11, 14, 44, and 61. The disordered stretch occupies residues 50-74; it reads TGYSRHDGIHDSPRGRSVLDTPLSS. The segment covering 53–63 has biased composition (basic and acidic residues); it reads SRHDGIHDSPR. Threonine 70 is subject to Phosphothreonine. Serine 547 is modified (phosphoserine).

It belongs to the glycosyl hydrolase 100 family. As to quaternary structure, forms homohexamers. Interacts with PIP5K9. Interaction with PIP5K9 represses CINV1 activity. Interacts with GRF1, GRF2, GRF3, GRF4, GRF5, GRF6, GRF7, GRF8 and GRF10; these interactions are dependent of the phosphorylation at Ser-547. Phosphorylated at Ser-547 by CPK3 and CPK21. In terms of tissue distribution, expressed in radicle, hypocotyls, root tips and vascular cylinder, leaf vasculature, shoot stipules, trichomes, stem, stigma apex and base of siliques.

It is found in the cytoplasm. It localises to the cytosol. Its subcellular location is the nucleus. The catalysed reaction is Hydrolysis of terminal non-reducing beta-D-fructofuranoside residues in beta-D-fructofuranosides.. In terms of biological role, cytosolic invertase that specifically cleaves sucrose into glucose and fructose and is involved in the regulation of multiple tissue development including primary root elongation, root hair growth, leaf and silique development, and floral transition. Is involved in osmotic stress-induced inhibition on lateral root growth by controlling the concentration of hexose in cells. May regulate sugar-mediated root development by controlling sucrose catabolism in root cells. Contributes to carbon partitioning and cellulose biosynthesis in seedlings. This chain is Alkaline/neutral invertase CINV1, found in Arabidopsis thaliana (Mouse-ear cress).